The primary structure comprises 179 residues: Large ribosomal subunit protein uL5 (179 aa).

At lysine 3 the chain carries N6-acetyllysine.

Belongs to the universal ribosomal protein uL5 family. In terms of assembly, part of the 50S ribosomal subunit; part of the 5S rRNA/L5/L18/L25 subcomplex. Contacts the 5S rRNA and the P site tRNA. Forms a bridge to the 30S subunit in the 70S ribosome.

Functionally, this is one of the proteins that bind and probably mediate the attachment of the 5S RNA into the large ribosomal subunit, where it forms part of the central protuberance. In the 70S ribosome it contacts protein S13 of the 30S subunit (bridge B1b), connecting the 2 subunits; this bridge is implicated in subunit movement. Contacts the P site tRNA; the 5S rRNA and some of its associated proteins might help stabilize positioning of ribosome-bound tRNAs. The sequence is that of Large ribosomal subunit protein uL5 from Escherichia coli O45:K1 (strain S88 / ExPEC).